A 698-amino-acid polypeptide reads, in one-letter code: Pentatricopeptide repeat-containing protein 1, mitochondrial (698 aa).

The disordered stretch occupies residues 49-88; it reads SSSQLPLGQERQENTGSLGSDPSHSNSTATQEEDEEESFG. A compositionally biased stretch (polar residues) spans 62 to 78; sequence NTGSLGSDPSHSNSTAT. PPR repeat units follow at residues 133–169, 170–204, 205–243, 244–278, 279–315, and 316–352; these read TPYW…RLQP, MESN…DLEP, SDAT…NFEL, NLKT…GHVV, TEET…GLQP, and SRDS…ATVL. The interval 392–419 is disordered; the sequence is QALGPPEPPEARVPSKAQPEVDTKAEPS. 3 PPR repeats span residues 517 to 551, 552 to 583, and 584 to 618; these read DLTF…GLVP, NLQT…QVTP, and NSHI…RVPV. The disordered stretch occupies residues 670 to 698; sequence HPWQKFRTKPQEDQDTRKEADDGCALGGR. Residues 678 to 690 show a composition bias toward basic and acidic residues; it reads KPQEDQDTRKEAD.

This sequence belongs to the PTCD1 family. Associates with mitochondrial leucine tRNAs. Interacts with ELAC2.

It is found in the mitochondrion. It localises to the mitochondrion matrix. Functionally, mitochondrial protein implicated in negative regulation of leucine tRNA levels, as well as negative regulation of mitochondria-encoded proteins and COX activity. Also affects the 3'-processing of mitochondrial tRNAs. This is Pentatricopeptide repeat-containing protein 1, mitochondrial (PTCD1) from Pongo abelii (Sumatran orangutan).